The following is a 166-amino-acid chain: Large ribosomal subunit protein uL10 (166 aa).

This sequence belongs to the universal ribosomal protein uL10 family. Part of the ribosomal stalk of the 50S ribosomal subunit. The N-terminus interacts with L11 and the large rRNA to form the base of the stalk. The C-terminus forms an elongated spine to which L12 dimers bind in a sequential fashion forming a multimeric L10(L12)X complex.

Forms part of the ribosomal stalk, playing a central role in the interaction of the ribosome with GTP-bound translation factors. The sequence is that of Large ribosomal subunit protein uL10 from Ureaplasma urealyticum serovar 10 (strain ATCC 33699 / Western).